Consider the following 200-residue polypeptide: MLLPYLNKDLIEAGCDEAGRGCLAGSVYAAAVILPKDFKNELLNDSKQLTEKQRYALREVIEKEALAWAVGVVSPEEIDEINILRASFLAMHRAVDQLSVRPQHLLIDGNRFNKYPDIPHTTVIKGDGKYLSIAAASILAKTYRDDYMNRLHEEYPFYDWNKNKGYPTKKHRAAIAEHGTTPYHRMTFNLLGDGQLNLNF.

The RNase H type-2 domain occupies 10-200 (LIEAGCDEAG…LGDGQLNLNF (191 aa)). The a divalent metal cation site is built by Asp16, Glu17, and Asp108.

Belongs to the RNase HII family. Requires Mn(2+) as cofactor. It depends on Mg(2+) as a cofactor.

Its subcellular location is the cytoplasm. The enzyme catalyses Endonucleolytic cleavage to 5'-phosphomonoester.. Functionally, endonuclease that specifically degrades the RNA of RNA-DNA hybrids. This is Ribonuclease HII from Bacteroides thetaiotaomicron (strain ATCC 29148 / DSM 2079 / JCM 5827 / CCUG 10774 / NCTC 10582 / VPI-5482 / E50).